The sequence spans 97 residues: YcgL domain-containing protein PSPPH_1548 (97 aa).

The YcgL domain maps to Arg-3 to Pro-87.

In Pseudomonas savastanoi pv. phaseolicola (strain 1448A / Race 6) (Pseudomonas syringae pv. phaseolicola (strain 1448A / Race 6)), this protein is YcgL domain-containing protein PSPPH_1548.